The primary structure comprises 306 residues: tRNA-cytidine(32) 2-sulfurtransferase (306 aa).

The PP-loop motif motif lies at 49–54 (SGGKDS). [4Fe-4S] cluster-binding residues include C124, C127, and C215.

Belongs to the TtcA family. Homodimer. The cofactor is Mg(2+). It depends on [4Fe-4S] cluster as a cofactor.

It localises to the cytoplasm. The enzyme catalyses cytidine(32) in tRNA + S-sulfanyl-L-cysteinyl-[cysteine desulfurase] + AH2 + ATP = 2-thiocytidine(32) in tRNA + L-cysteinyl-[cysteine desulfurase] + A + AMP + diphosphate + H(+). It participates in tRNA modification. Functionally, catalyzes the ATP-dependent 2-thiolation of cytidine in position 32 of tRNA, to form 2-thiocytidine (s(2)C32). The sulfur atoms are provided by the cysteine/cysteine desulfurase (IscS) system. The sequence is that of tRNA-cytidine(32) 2-sulfurtransferase from Azoarcus sp. (strain BH72).